Reading from the N-terminus, the 391-residue chain is Oxytocin receptor (391 aa).

Topologically, residues 1-38 (MEGAFAANWSAEAVNGSAAPPGTEGNRTAGPPQRNEAL) are extracellular. 3 N-linked (GlcNAc...) asparagine glycosylation sites follow: N8, N15, and N26. The helical transmembrane segment at 39-63 (ARVEVAVLSLILFLALSGNACVLLA) threads the bilayer. At 64-74 (LRTTRHKHSRL) the chain is on the cytoplasmic side. A helical membrane pass occupies residues 75–97 (FFFMKHLSIADLAVAVFQVLPQL). Over 98-113 (LWDITFRFYGPDLLCR) the chain is Extracellular. A disulfide bridge links C112 with C187. Residues 114–135 (LVKYLQVVGMFASTYLLLLMSL) traverse the membrane as a helical segment. At 136–154 (DRCLAICQPLRSLRRRTDR) the chain is on the cytoplasmic side. The helical transmembrane segment at 155–175 (LAVLATWLGCLVASAPQVHIF) threads the bilayer. The Extracellular segment spans residues 176 to 202 (SLREVADGVFDCWAVFIQPWGPKAYIT). Residues 203–225 (WITLAVYIVPVIVLAACYGLISF) form a helical membrane-spanning segment. The Cytoplasmic segment spans residues 226 to 277 (KIWQNLRLKTEAAAAEASAGAEGAAADCAGRAALARVSNVKLISKAKIRTVK). The chain crosses the membrane as a helical span at residues 278 to 296 (MTFIVVLAFIVCWTPFFFK). The Extracellular portion of the chain corresponds to 297 to 311 (QMWSVWDADAPKEAS). Residues 312 to 334 (AFIIAMLLASLNSCCNPWIYMLF) form a helical membrane-spanning segment. Topologically, residues 335–391 (TGHLFQDLVQRFLCCSFRRLKGSQLGETSVTKKIHSYTFVLSRHSSSQRSCSQPSTV) are cytoplasmic. Position 370 is a phosphoserine (S370).

Belongs to the G-protein coupled receptor 1 family. Vasopressin/oxytocin receptor subfamily.

It is found in the cell membrane. Receptor for oxytocin. The activity of this receptor is mediated by G proteins which activate a phosphatidylinositol-calcium second messenger system. This chain is Oxytocin receptor (OXTR), found in Ovis aries (Sheep).